The sequence spans 187 residues: MEKKETKSESEKTNKQDNKNTKSQKKENLNLVNSDKKIAELENEISNLKDLYLRKQAEFENFRKRLEKEKDNFVKFANETIMKDVVNFLDNLERAINSSKKSKDFDNLLTGISMIENEILSIFDKKYNLKKFGENGENFDPSRHEAISIEEKEGLKNPEIVEVYQKGYCYNDRILRTAKVKVAQSKN.

Residues 1–30 are disordered; the sequence is MEKKETKSESEKTNKQDNKNTKSQKKENLN.

It belongs to the GrpE family. In terms of assembly, homodimer.

Its subcellular location is the cytoplasm. In terms of biological role, participates actively in the response to hyperosmotic and heat shock by preventing the aggregation of stress-denatured proteins, in association with DnaK and GrpE. It is the nucleotide exchange factor for DnaK and may function as a thermosensor. Unfolded proteins bind initially to DnaJ; upon interaction with the DnaJ-bound protein, DnaK hydrolyzes its bound ATP, resulting in the formation of a stable complex. GrpE releases ADP from DnaK; ATP binding to DnaK triggers the release of the substrate protein, thus completing the reaction cycle. Several rounds of ATP-dependent interactions between DnaJ, DnaK and GrpE are required for fully efficient folding. In Borreliella burgdorferi (strain ATCC 35210 / DSM 4680 / CIP 102532 / B31) (Borrelia burgdorferi), this protein is Protein GrpE.